A 182-amino-acid polypeptide reads, in one-letter code: Oligoribonuclease (182 aa).

One can recognise an Exonuclease domain in the interval 8–171 (LIWIDLEMTG…DDIRESIKEL (164 aa)). Tyrosine 129 is an active-site residue.

This sequence belongs to the oligoribonuclease family.

The protein localises to the cytoplasm. Its function is as follows. 3'-to-5' exoribonuclease specific for small oligoribonucleotides. The polypeptide is Oligoribonuclease (Haemophilus influenzae (strain 86-028NP)).